The following is a 72-amino-acid chain: MTKKAKNVEKIPFEDAMKRLEEIIDLMNQPTTSLEASLTLYEEADQLMRICESHIQEVEARIKQLSDQRSES.

This sequence belongs to the XseB family. In terms of assembly, heterooligomer composed of large and small subunits.

The protein resides in the cytoplasm. It catalyses the reaction Exonucleolytic cleavage in either 5'- to 3'- or 3'- to 5'-direction to yield nucleoside 5'-phosphates.. Its function is as follows. Bidirectionally degrades single-stranded DNA into large acid-insoluble oligonucleotides, which are then degraded further into small acid-soluble oligonucleotides. The sequence is that of Exodeoxyribonuclease 7 small subunit from Chlamydia trachomatis serovar A (strain ATCC VR-571B / DSM 19440 / HAR-13).